A 210-amino-acid polypeptide reads, in one-letter code: MAVVLEAKERPDKKHSTLRRIRLQGNIPGILYGKNIDNQMIFVSGAALEKTIREGGRHSLMTLKIGEKDYSVLLREIQRDPLRGNILHADFQAVDMSTEVDIDVDVRLIGEAAGEKDGGVLQQNLHQLTIRVLPANIPPSIDIDISHLQIGDTVTVGDINTGGKYEIIDDPSEVIATILPPQQEEEIHSGEQQEPGHPDAEEGRETTPES.

The disordered stretch occupies residues 179-210 (LPPQQEEEIHSGEQQEPGHPDAEEGRETTPES). Over residues 185-210 (EEIHSGEQQEPGHPDAEEGRETTPES) the composition is skewed to basic and acidic residues.

The protein belongs to the bacterial ribosomal protein bL25 family. CTC subfamily. In terms of assembly, part of the 50S ribosomal subunit; part of the 5S rRNA/L5/L18/L25 subcomplex. Contacts the 5S rRNA. Binds to the 5S rRNA independently of L5 and L18.

Its function is as follows. This is one of the proteins that binds to the 5S RNA in the ribosome where it forms part of the central protuberance. This Geobacillus sp. (strain WCH70) protein is Large ribosomal subunit protein bL25.